The sequence spans 179 residues: UPF0316 protein Ping_1367 (179 aa).

2 helical membrane-spanning segments follow: residues 28 to 48 and 55 to 75; these read FLAS…SAQV and WYLA…GISI.

It belongs to the UPF0316 family.

The protein resides in the cell membrane. The sequence is that of UPF0316 protein Ping_1367 from Psychromonas ingrahamii (strain DSM 17664 / CCUG 51855 / 37).